A 443-amino-acid polypeptide reads, in one-letter code: ATP-dependent protease ATPase subunit HslU (443 aa).

ATP-binding positions include isoleucine 18, 60–65, aspartate 256, glutamate 321, and arginine 393; that span reads GVGKTE.

The protein belongs to the ClpX chaperone family. HslU subfamily. In terms of assembly, a double ring-shaped homohexamer of HslV is capped on each side by a ring-shaped HslU homohexamer. The assembly of the HslU/HslV complex is dependent on binding of ATP.

The protein resides in the cytoplasm. ATPase subunit of a proteasome-like degradation complex; this subunit has chaperone activity. The binding of ATP and its subsequent hydrolysis by HslU are essential for unfolding of protein substrates subsequently hydrolyzed by HslV. HslU recognizes the N-terminal part of its protein substrates and unfolds these before they are guided to HslV for hydrolysis. The chain is ATP-dependent protease ATPase subunit HslU from Yersinia pestis bv. Antiqua (strain Antiqua).